Consider the following 414-residue polypeptide: Serine hydroxymethyltransferase (414 aa).

(6S)-5,6,7,8-tetrahydrofolate is bound by residues leucine 117 and 121-123; that span reads GHL. Lysine 226 bears the N6-(pyridoxal phosphate)lysine mark. Residue 349–351 participates in (6S)-5,6,7,8-tetrahydrofolate binding; it reads SPF.

Belongs to the SHMT family. As to quaternary structure, homodimer. Pyridoxal 5'-phosphate is required as a cofactor.

It is found in the cytoplasm. It carries out the reaction (6R)-5,10-methylene-5,6,7,8-tetrahydrofolate + glycine + H2O = (6S)-5,6,7,8-tetrahydrofolate + L-serine. It participates in one-carbon metabolism; tetrahydrofolate interconversion. The protein operates within amino-acid biosynthesis; glycine biosynthesis; glycine from L-serine: step 1/1. Catalyzes the reversible interconversion of serine and glycine with tetrahydrofolate (THF) serving as the one-carbon carrier. Also exhibits THF-independent aldolase activity toward beta-hydroxyamino acids, producing glycine and aldehydes, via a retro-aldol mechanism. The protein is Serine hydroxymethyltransferase of Methanospirillum hungatei JF-1 (strain ATCC 27890 / DSM 864 / NBRC 100397 / JF-1).